Here is a 441-residue protein sequence, read N- to C-terminus: GTPase Der (441 aa).

EngA-type G domains follow at residues 4 to 169 (SIVA…PPEA) and 178 to 353 (PRIA…QNRN). GTP-binding positions include 10 to 17 (GRPNVGKS), 57 to 61 (DTGGI), 120 to 123 (NKVD), 184 to 191 (GKPNVGKS), 231 to 235 (DTAGL), and 296 to 299 (NKWD). Residues 354–438 (LRISTGVLNE…SLKFFIRERK (85 aa)) enclose the KH-like domain.

This sequence belongs to the TRAFAC class TrmE-Era-EngA-EngB-Septin-like GTPase superfamily. EngA (Der) GTPase family. As to quaternary structure, associates with the 50S ribosomal subunit.

Functionally, GTPase that plays an essential role in the late steps of ribosome biogenesis. The chain is GTPase Der from Lachnoclostridium phytofermentans (strain ATCC 700394 / DSM 18823 / ISDg) (Clostridium phytofermentans).